A 328-amino-acid polypeptide reads, in one-letter code: MHTLIERLEKVTNSKELEEARLNALGKKGVFADKFNQLKHLNGEEKNAFAKEIHHYKQAFEKAFEWKKKAIIELELEERLKKEKIDVSLFNAIKTSSSHPLNYTKNKIIEFFTPLGYKLEIGSLVEDDFHNFSALNLPPYHPARDMQDTFYFKDHKLLRTHTSPVQIHTMQEQTPPIKMICLGETFRRDYDLTHTPMFHQIEGLVVDQKGNIRFTHLKGVIEDFLHYFFGGVKLRWRSSFFPFTEPSAEVDISCVFCKQEGCRVCSHTGWLEVLGCGMVNNAVFEAIGYENVSGFAFGMGIERLAMLTCQINDLRSFFETDLRVLESF.

Residue E245 coordinates Mg(2+).

The protein belongs to the class-II aminoacyl-tRNA synthetase family. Phe-tRNA synthetase alpha subunit type 1 subfamily. Tetramer of two alpha and two beta subunits. It depends on Mg(2+) as a cofactor.

Its subcellular location is the cytoplasm. The enzyme catalyses tRNA(Phe) + L-phenylalanine + ATP = L-phenylalanyl-tRNA(Phe) + AMP + diphosphate + H(+). This Helicobacter pylori (strain ATCC 700392 / 26695) (Campylobacter pylori) protein is Phenylalanine--tRNA ligase alpha subunit (pheS).